The sequence spans 33 residues: Photosystem II reaction center protein Psb30 (33 aa).

Residues 5–25 (ILSQLIAIAVTLFLGPVVVIL) form a helical membrane-spanning segment.

It belongs to the Psb30/Ycf12 family. As to quaternary structure, PSII is composed of 1 copy each of membrane proteins PsbA, PsbB, PsbC, PsbD, PsbE, PsbF, PsbH, PsbI, PsbJ, PsbK, PsbL, PsbM, PsbT, PsbX, PsbY, PsbZ, Psb30/Ycf12, peripheral proteins of the oxygen-evolving complex and a large number of cofactors. It forms dimeric complexes.

The protein resides in the plastid. It localises to the chloroplast thylakoid membrane. Functionally, a core subunit of photosystem II (PSII), probably helps stabilize the reaction center. The protein is Photosystem II reaction center protein Psb30 of Oedogonium cardiacum (Filamentous green alga).